We begin with the raw amino-acid sequence, 291 residues long: Ribosomal protein L11 methyltransferase (291 aa).

S-adenosyl-L-methionine-binding residues include Thr136, Gly159, Asp181, and Asn228.

The protein belongs to the methyltransferase superfamily. PrmA family.

It localises to the cytoplasm. It carries out the reaction L-lysyl-[protein] + 3 S-adenosyl-L-methionine = N(6),N(6),N(6)-trimethyl-L-lysyl-[protein] + 3 S-adenosyl-L-homocysteine + 3 H(+). Functionally, methylates ribosomal protein L11. This chain is Ribosomal protein L11 methyltransferase, found in Sinorhizobium fredii (strain NBRC 101917 / NGR234).